The chain runs to 197 residues: Chitin synthase 3 (197 aa).

This sequence belongs to the chitin synthase family. Class III subfamily.

The protein resides in the cell membrane. The catalysed reaction is [(1-&gt;4)-N-acetyl-beta-D-glucosaminyl](n) + UDP-N-acetyl-alpha-D-glucosamine = [(1-&gt;4)-N-acetyl-beta-D-glucosaminyl](n+1) + UDP + H(+). Polymerizes chitin, a structural polymer of the cell wall and septum, by transferring the sugar moiety of UDP-GlcNAc to the non-reducing end of the growing chitin polymer. This is Chitin synthase 3 (CHS3) from Exophiala jeanselmei (Dematiaceous fungus).